The chain runs to 429 residues: Adenylosuccinate synthetase (429 aa).

GTP contacts are provided by residues 13–19 and 41–43; these read GDEGKGK and GHT. Asp-14 serves as the catalytic Proton acceptor. Mg(2+) contacts are provided by Asp-14 and Gly-41. Residues 14–17, 39–42, Thr-130, Arg-144, Gln-225, Thr-240, and Arg-304 contribute to the IMP site; these read DEGK and NAGH. The Proton donor role is filled by His-42. Residue 300–306 participates in substrate binding; it reads ATTGRAR. GTP-binding positions include Arg-306, 332-334, and 414-416; these read KLD and STG.

Belongs to the adenylosuccinate synthetase family. As to quaternary structure, homodimer. It depends on Mg(2+) as a cofactor.

Its subcellular location is the cytoplasm. The catalysed reaction is IMP + L-aspartate + GTP = N(6)-(1,2-dicarboxyethyl)-AMP + GDP + phosphate + 2 H(+). It participates in purine metabolism; AMP biosynthesis via de novo pathway; AMP from IMP: step 1/2. Its function is as follows. Plays an important role in the de novo pathway of purine nucleotide biosynthesis. Catalyzes the first committed step in the biosynthesis of AMP from IMP. In Acidithiobacillus ferrooxidans (Thiobacillus ferrooxidans), this protein is Adenylosuccinate synthetase.